The primary structure comprises 727 residues: Elongation factor 2 (727 aa).

A tr-type G domain is found at 19-260 (DQIRNMGICA…MAITHLPNPL (242 aa)). GTP-binding positions include 28–35 (AHIDHGKT), 94–98 (DTPGH), and 148–151 (NKVD). His-603 carries the post-translational modification Diphthamide.

The protein belongs to the TRAFAC class translation factor GTPase superfamily. Classic translation factor GTPase family. EF-G/EF-2 subfamily.

The protein localises to the cytoplasm. In terms of biological role, catalyzes the GTP-dependent ribosomal translocation step during translation elongation. During this step, the ribosome changes from the pre-translocational (PRE) to the post-translocational (POST) state as the newly formed A-site-bound peptidyl-tRNA and P-site-bound deacylated tRNA move to the P and E sites, respectively. Catalyzes the coordinated movement of the two tRNA molecules, the mRNA and conformational changes in the ribosome. The polypeptide is Elongation factor 2 (Methanococcus maripaludis (strain C6 / ATCC BAA-1332)).